A 102-amino-acid polypeptide reads, in one-letter code: NADH-quinone oxidoreductase subunit K (102 aa).

Helical transmembrane passes span 6 to 26, 30 to 50, and 62 to 82; these read LEHG…GLMV, ILFV…AFIV, and VMFI…LAIL.

Belongs to the complex I subunit 4L family. In terms of assembly, NDH-1 is composed of 13 different subunits. Subunits NuoA, H, J, K, L, M, N constitute the membrane sector of the complex.

It localises to the cell inner membrane. It catalyses the reaction a quinone + NADH + 5 H(+)(in) = a quinol + NAD(+) + 4 H(+)(out). NDH-1 shuttles electrons from NADH, via FMN and iron-sulfur (Fe-S) centers, to quinones in the respiratory chain. The immediate electron acceptor for the enzyme in this species is believed to be ubiquinone. Couples the redox reaction to proton translocation (for every two electrons transferred, four hydrogen ions are translocated across the cytoplasmic membrane), and thus conserves the redox energy in a proton gradient. The polypeptide is NADH-quinone oxidoreductase subunit K (Pseudomonas putida (strain W619)).